We begin with the raw amino-acid sequence, 629 residues long: Methyl-accepting chemotaxis protein PctB (629 aa).

The Cytoplasmic portion of the chain corresponds to 1 to 10; that stretch reads MIKSLKFSHK. The chain crosses the membrane as a helical span at residues 11–31; the sequence is ILLAAALVVIATFSLFTLYND. Over 32 to 276 the chain is Periplasmic; the sequence is SLQRASIRED…AYAMLTKLRT (245 aa). Residues 37 to 260 form the Cache domain; that stretch reads SIREDLEDYL…LSGLDWYIGI (224 aa). Residues Tyr109, Ser115, Tyr121, 126-128, Glu146, and Asp173 each bind L-arginine; that span reads RPW. Residues Ser115, Tyr121, 126–128, 144–146, and Asp173 contribute to the L-glutamine site; these read RPW and YME. A helical membrane pass occupies residues 277–297; sequence SAIVAALIAVVAIVLLLGMLI. The 55-residue stretch at 298 to 352 folds into the HAMP domain; that stretch reads RVLMQPLTDMGRAMQDIAQGEGDLTKRLKVTSNDEFGALAISFNRFVERIHESIR. The Cytoplasmic portion of the chain corresponds to 298 to 629; the sequence is RVLMQPLTDM…LRQLVDSFKI (332 aa). The region spanning 357–593 is the Methyl-accepting transducer domain; the sequence is TARQLHDVAQ…SLNMDITEIN (237 aa). A disordered region spans residues 405-424; sequence RNAADASHHASDANHQAEDG. The span at 410–424 shows a compositional bias: basic and acidic residues; sequence ASHHASDANHQAEDG.

Belongs to the methyl-accepting chemotaxis (MCP) protein family. As to quaternary structure, monomer in the absence and presence of ligands.

It is found in the cell inner membrane. Its function is as follows. Chemotactic-signal transducers respond to changes in the concentration of attractants and repellents in the environment, transduce a signal from the outside to the inside of the cell, and facilitate sensory adaptation through the variation of the level of methylation. Responds to L-Arg, L-Gln, L-Ala, L-Glu, L-Lys, L-Met and L-Tyr. Also involved in repellent responses to trichloroethylene (TCE), chloroform and methylthiocyanate. The chain is Methyl-accepting chemotaxis protein PctB (pctB) from Pseudomonas aeruginosa (strain ATCC 15692 / DSM 22644 / CIP 104116 / JCM 14847 / LMG 12228 / 1C / PRS 101 / PAO1).